A 1218-amino-acid polypeptide reads, in one-letter code: Protein dispatched (1218 aa).

A helical membrane pass occupies residues 21 to 41; the sequence is YLVVVSIAVYCVACIIVALVL. A disordered region spans residues 99-135; sequence VETKLHPNHRRRKNKHKNRNKNKRRKEQNQSSHEHHD. Residues 104–124 show a composition bias toward basic residues; that stretch reads HPNHRRRKNKHKNRNKNKRRK. N-linked (GlcNAc...) asparagine glycans are attached at residues Asn127, Asn176, Asn197, Asn264, Asn319, and Asn388. The region spanning 430-624 is the SSD domain; it reads AMDLGLENEL…ITWLPASVSI (195 aa). Helical transmembrane passes span 443–463, 473–493, 504–524, 570–590, 598–618, and 670–690; these read LLLTDVWLVSLGGTFVMASVW, LMSCVAICFSLGLAYFFYAIV, LLAVVVIIGIGADDVFLFLKI, AAASMFVTSLTTAGAFYASYS, CFGIFAGTVVVTNYLLMITWL, and AYLWLLIFGALGASSAVIVFW. 3 N-linked (GlcNAc...) asparagine glycosylation sites follow: Asn767, Asn883, and Asn891. The next 5 helical transmembrane spans lie at 975-995, 996-1016, 1019-1039, 1058-1078, and 1087-1107; these read LAVLLCFTVNILISIYAVLTV, SLSIFNTVAVLILLGWQLNIL, IAVSTAIGLAVDFSLHYGIHY, IIGPTVMAATTTGLAGGIMMA, and IGVFLVVVMIVSWFYATFFLM.

It belongs to the dispatched family.

It is found in the membrane. In terms of biological role, segment polarity protein which functions in hedgehog (Hh) signaling. Regulates the trafficking and the release of cholesterol-modified hedgehog protein from cells of the posterior compartment (P cells) and is hence required for the effective production of the Hh signal. The polypeptide is Protein dispatched (disp) (Drosophila melanogaster (Fruit fly)).